The following is a 150-amino-acid chain: Putative pre-16S rRNA nuclease (150 aa).

The protein belongs to the YqgF nuclease family.

Its subcellular location is the cytoplasm. In terms of biological role, could be a nuclease involved in processing of the 5'-end of pre-16S rRNA. The sequence is that of Putative pre-16S rRNA nuclease from Syntrophus aciditrophicus (strain SB).